A 144-amino-acid chain; its full sequence is Eukaryotic translation initiation factor 1A (144 aa).

The segment covering 1–15 (MPKNKGKGGKNRKRG) has biased composition (basic residues). 2 disordered regions span residues 1-25 (MPKN…DKRE) and 120-144 (DVDG…IDKI). The span at 16–25 (KNEADDDKRE) shows a compositional bias: basic and acidic residues. Residues 22–96 (DKRELVFKED…DKADVILKYM (75 aa)) enclose the S1-like domain.

The protein belongs to the eIF-1A family.

In terms of biological role, seems to be required for maximal rate of protein biosynthesis. Enhances ribosome dissociation into subunits and stabilizes the binding of the initiator Met-tRNA(I) to 40 S ribosomal subunits. The protein is Eukaryotic translation initiation factor 1A of Triticum aestivum (Wheat).